The primary structure comprises 549 residues: MTDGPLIVQSDKTVLLEVDHELAGAARAAIAPFAELERAPEHVHTYRITPLALWNARAAGHDAEQVVDALVSYSRYAVPQPLLVDIVDTMARYGRLQLVKNPAHGLTLVSLDRAVLEEVLRNKKIAPMLGARIDDDTVVVHPSERGRVKQLLLKIGWPAEDLAGYVDGEAHPISLHQEGWQLRDYQRLAADSFWAGGSGVVVLPCGAGKTLVGAAAMAKAGATTLILVTNIVAARQWKRELVARTSLTENEIGEFSGERKEIRPVTISTYQMITRRTKGEYRHLELFDSRDWGLIIYDEVHLLPAPVFRMTADLQSKRRLGLTATLIREDGREGDVFSLIGPKRYDAPWKDIEAQGWIAPAECVEVRVTMTDSERMMYATAEPEERYRICSTVHTKIAVVKSILAKHPDEQTLVIGAYLDQLDELGAELGAPVIQGSTRTSEREALFDAFRRGEVATLVVSKVANFSIDLPEAAVAVQVSGTFGSRQEEAQRLGRILRPKADGGGAIFYSVVARDSLDAEYAAHRQRFLAEQGYGYIIRDADDLLGPAI.

Residues 1 to 130 (MTDGPLIVQS…RNKKIAPMLG (130 aa)) are required for protein stability or solubility. A Helicase ATP-binding domain is found at 190 to 344 (ADSFWAGGSG…DVFSLIGPKR (155 aa)). Residue 203-210 (LPCGAGKT) participates in ATP binding. The DEAH box motif lies at 298–301 (DEVH). The 147-residue stretch at 399–545 (VVKSILAKHP…YIIRDADDLL (147 aa)) folds into the Helicase C-terminal domain.

The protein belongs to the helicase family. RAD25/XPB subfamily. As to quaternary structure, monomer. Mn(2+) serves as cofactor. It depends on Mg(2+) as a cofactor.

It carries out the reaction Couples ATP hydrolysis with the unwinding of duplex DNA by translocating in the 3'-5' direction.. It catalyses the reaction ATP + H2O = ADP + phosphate + H(+). Its function is as follows. ATP-dependent 3'-5' DNA helicase, unwinds 3'-overhangs, 3'- flaps, and splayed-arm DNA substrates but not 5'-overhangs, 5'-flap substrates, 3-way junctions or Holliday junctions. Not highly efficient in vitro. Requires ATP hydrolysis for helicase activity; the ATPase activity is DNA-dependent and requires a minimum of 4 single-stranded nucleotides (nt) with 6-10 nt providing all necessary interactions for full processive unwinding. The ATPase prefers ATP over CTP or GTP, is almost inactive with TTP. DNA helicase activity requires ATP or dATP and only acts when the 3'-overhang is &gt;20 nt. Capable of unwinding a DNA:RNA hybrid if the 3'-overhang is DNA. Also catalyzes ATP-independent annealing of complementary DNA strands; annealing requires Mg(2+). In Mycobacterium tuberculosis (strain ATCC 25618 / H37Rv), this protein is DNA 3'-5' helicase XPB.